Reading from the N-terminus, the 1334-residue chain is Aldehyde oxidase 1 (1334 aa).

The 88-residue stretch at 5 to 92 (PELLFYVNGR…GAAVTTVEGI (88 aa)) folds into the 2Fe-2S ferredoxin-type domain. The [2Fe-2S] cluster site is built by cysteine 44, cysteine 49, cysteine 52, and cysteine 74. Glutamine 113 contacts Mo-molybdopterin. Residues cysteine 114, cysteine 117, cysteine 149, and cysteine 151 each coordinate [2Fe-2S] cluster. Position 151 (cysteine 151) interacts with Mo-molybdopterin. One can recognise an FAD-binding PCMH-type domain in the interval 236-421 (FSGERMMWIS…ASVHIPYSRK (186 aa)). Residues 264–271 (VVMGNTSV), alanine 345, serine 354, histidine 358, aspartate 367, and leucine 411 contribute to the FAD site. Residues 802–803 (AF) and methionine 1043 contribute to the Mo-molybdopterin site. Serine 1064 carries the post-translational modification Phosphoserine. Residues 1084–1087 (GSVV), glutamine 1199, and leucine 1264 contribute to the Mo-molybdopterin site. Glutamate 1266 serves as the catalytic Proton acceptor; for azaheterocycle hydroxylase activity.

This sequence belongs to the xanthine dehydrogenase family. In terms of assembly, homodimer. [2Fe-2S] cluster is required as a cofactor. It depends on FAD as a cofactor. The cofactor is Mo-molybdopterin. The N-terminus is blocked. In terms of tissue distribution, very high expression in liver and lung. High expression in kidney, pancreas, brain stem and spinal cord. Moderate expression in heart, testis, eye, cerebral cortex and cerebellum. Low expression in stomach and muscle.

The protein resides in the cytoplasm. The enzyme catalyses an aldehyde + O2 + H2O = a carboxylate + H2O2 + H(+). It catalyses the reaction retinal + O2 + H2O = retinoate + H2O2 + H(+). The catalysed reaction is all-trans-retinal + O2 + H2O = all-trans-retinoate + H2O2 + H(+). With respect to regulation, inhibited by hydralazine and menadione. Not inhibited by BOF-4272 or allopurinol, xanthine dehydrogenase potent inhibitors. In contrast to guinea pig, human and rat, isovanillin is not an inhibitor but a substrate for AOX1 in rabbit. Its function is as follows. Oxidase with broad substrate specificity, oxidizing aromatic azaheterocycles, such as N1-methylnicotinamide, N-methylphthalazinium and phthalazine, as well as aldehydes, such as benzaldehyde, retinal, pyridoxal, and vanillin. Plays a key role in the metabolism of xenobiotics and drugs containing aromatic azaheterocyclic substituents. Participates in the bioactivation of prodrugs such as famciclovir, catalyzing the oxidation step from 6-deoxypenciclovir to penciclovir, which is a potent antiviral agent. Is probably involved in the regulation of reactive oxygen species homeostasis. May be a prominent source of superoxide generation via the one-electron reduction of molecular oxygen. May also catalyze nitric oxide (NO) production via the reduction of nitrite to NO with NADH or aldehyde as electron donor. May play a role in adipogenesis. Cannot use hypoxanthine and all-trans-retinol as substrate. The protein is Aldehyde oxidase 1 of Oryctolagus cuniculus (Rabbit).